A 393-amino-acid chain; its full sequence is Formate-dependent phosphoribosylglycinamide formyltransferase (393 aa).

N(1)-(5-phospho-beta-D-ribosyl)glycinamide-binding positions include 22–23 (EL) and Glu82. ATP contacts are provided by residues Arg114, Lys155, 160 to 165 (SSGKGQ), 195 to 198 (EGFI), and Glu203. In terms of domain architecture, ATP-grasp spans 119–308 (RLAAEELGLP…EFALHARAIL (190 aa)). Mg(2+)-binding residues include Glu267 and Glu279. N(1)-(5-phospho-beta-D-ribosyl)glycinamide contacts are provided by residues Asp286, Lys356, and 363–364 (RR).

It belongs to the PurK/PurT family. Homodimer.

It catalyses the reaction N(1)-(5-phospho-beta-D-ribosyl)glycinamide + formate + ATP = N(2)-formyl-N(1)-(5-phospho-beta-D-ribosyl)glycinamide + ADP + phosphate + H(+). Its pathway is purine metabolism; IMP biosynthesis via de novo pathway; N(2)-formyl-N(1)-(5-phospho-D-ribosyl)glycinamide from N(1)-(5-phospho-D-ribosyl)glycinamide (formate route): step 1/1. Involved in the de novo purine biosynthesis. Catalyzes the transfer of formate to 5-phospho-ribosyl-glycinamide (GAR), producing 5-phospho-ribosyl-N-formylglycinamide (FGAR). Formate is provided by PurU via hydrolysis of 10-formyl-tetrahydrofolate. The sequence is that of Formate-dependent phosphoribosylglycinamide formyltransferase from Stutzerimonas stutzeri (strain A1501) (Pseudomonas stutzeri).